Reading from the N-terminus, the 194-residue chain is ATP-dependent Clp protease proteolytic subunit 3 (194 aa).

Catalysis depends on serine 96, which acts as the Nucleophile. Residue histidine 121 is part of the active site.

Belongs to the peptidase S14 family. Fourteen ClpP subunits assemble into 2 heptameric rings which stack back to back to give a disk-like structure with a central cavity, resembling the structure of eukaryotic proteasomes.

The protein resides in the cytoplasm. The catalysed reaction is Hydrolysis of proteins to small peptides in the presence of ATP and magnesium. alpha-casein is the usual test substrate. In the absence of ATP, only oligopeptides shorter than five residues are hydrolyzed (such as succinyl-Leu-Tyr-|-NHMec, and Leu-Tyr-Leu-|-Tyr-Trp, in which cleavage of the -Tyr-|-Leu- and -Tyr-|-Trp bonds also occurs).. In terms of biological role, cleaves peptides in various proteins in a process that requires ATP hydrolysis. Has a chymotrypsin-like activity. Plays a major role in the degradation of misfolded proteins. The protein is ATP-dependent Clp protease proteolytic subunit 3 of Prochlorococcus marinus (strain NATL2A).